The sequence spans 266 residues: Gasdermin bGSDM (266 aa).

Residue cysteine 3 is the site of S-palmitoyl cysteine attachment. 4 consecutive transmembrane segments (beta stranded) span residues 69–85 (ISGQ…GLSI), 97–115 (KLGL…FEFQ), 163–180 (KFTI…ELTI), and 189–205 (GNVK…KICY).

It belongs to the bacterial gasdermin family. In terms of assembly, monomer. As to quaternary structure, forms large, homooligomeric ring-shaped pores when inserted in membranes. Palmitoylation helps stabilize the inactive state; may self palmitoylate. Palmitoylation plays a significant role in pore formation.

The protein localises to the cytoplasm. The protein resides in the cell inner membrane. The full-length protein before cleavage is inactive: intramolecular interactions between the N-terminal domain and the C-terminal region as well as the lipid modification, mediate autoinhibition. The pyroptosis-like-inducing activity is carried by the released N-terminal domain (Gasdermin bGSDM, N-terminus). Its function is as follows. Precursor of a pore-forming protein involved in defense against bacteriophages. Expression of bGSDM and the neighboring protease gene (Ga0182885_104520) is toxic in E.coli. Cleavage of this precursor by its dedicated protease releases the active moiety (gasdermin bGSDM, N-terminus) which inserts into membranes, forming pores and triggering cell death. Pore-forming protein that causes membrane permeabilization via a pyroptosis-like activity. Makes ring-like pores when released. This Desulfuromonadales bacterium protein is Gasdermin bGSDM.